A 379-amino-acid polypeptide reads, in one-letter code: Homoserine O-acetyltransferase (379 aa).

The 305-residue stretch at 52 to 356 folds into the AB hydrolase-1 domain; sequence NVVVVLHALT…VYGHDGFLVE (305 aa). Ser157 serves as the catalytic Nucleophile. A substrate-binding site is contributed by Arg227. Active-site residues include Asp320 and His350. Asp351 provides a ligand contact to substrate.

The protein belongs to the AB hydrolase superfamily. MetX family. In terms of assembly, homodimer.

Its subcellular location is the cytoplasm. It catalyses the reaction L-homoserine + acetyl-CoA = O-acetyl-L-homoserine + CoA. Its pathway is amino-acid biosynthesis; L-methionine biosynthesis via de novo pathway; O-acetyl-L-homoserine from L-homoserine: step 1/1. Its function is as follows. Transfers an acetyl group from acetyl-CoA to L-homoserine, forming acetyl-L-homoserine. The sequence is that of Homoserine O-acetyltransferase from Mycobacterium bovis (strain ATCC BAA-935 / AF2122/97).